A 324-amino-acid chain; its full sequence is tRNA U34 carboxymethyltransferase (324 aa).

Carboxy-S-adenosyl-L-methionine contacts are provided by residues Lys92, Trp106, Lys111, Gly131, 153–155, Met197, Tyr201, and Arg316; that span reads DPS.

Belongs to the class I-like SAM-binding methyltransferase superfamily. CmoB family. As to quaternary structure, homotetramer.

The enzyme catalyses carboxy-S-adenosyl-L-methionine + 5-hydroxyuridine(34) in tRNA = 5-carboxymethoxyuridine(34) in tRNA + S-adenosyl-L-homocysteine + H(+). Functionally, catalyzes carboxymethyl transfer from carboxy-S-adenosyl-L-methionine (Cx-SAM) to 5-hydroxyuridine (ho5U) to form 5-carboxymethoxyuridine (cmo5U) at position 34 in tRNAs. In Hahella chejuensis (strain KCTC 2396), this protein is tRNA U34 carboxymethyltransferase.